We begin with the raw amino-acid sequence, 314 residues long: MTTLSFHHVTVLMDEAVQGLNIRPGGIYVDCTLGGAGHSSLIASKLTEGGRLIAIDQDDWALDNARERLASYMDRVTLVKSNFRHIKDIVKDLGLSGVDGVLFDLGVSSPQLDEGERGFSYNADAPLDMRMDQQAPLSAYDIINEWDEEEIAKIIWLYGEEKFSRRIARQIVQQRKKQPIQTTGELVELIKEGIPAAARRTGPHPAKRTFQAIRIAVNDELDAFKEAVVDAIEVLNPEGRVSVITFHSLEDRICKQIYQDFSKGCTCPPAFPICTCGNKAVVKVITRKPILPSEEELEANKRARSAKLRVAEKL.

S-adenosyl-L-methionine is bound by residues 36 to 38, Asp-56, Phe-83, Asp-104, and Gln-111; that span reads AGH.

It belongs to the methyltransferase superfamily. RsmH family.

The protein localises to the cytoplasm. It carries out the reaction cytidine(1402) in 16S rRNA + S-adenosyl-L-methionine = N(4)-methylcytidine(1402) in 16S rRNA + S-adenosyl-L-homocysteine + H(+). In terms of biological role, specifically methylates the N4 position of cytidine in position 1402 (C1402) of 16S rRNA. The protein is Ribosomal RNA small subunit methyltransferase H of Brevibacillus brevis (strain 47 / JCM 6285 / NBRC 100599).